We begin with the raw amino-acid sequence, 180 residues long: Large ribosomal subunit protein uL5 (180 aa).

Belongs to the universal ribosomal protein uL5 family. As to quaternary structure, part of the 50S ribosomal subunit; part of the 5S rRNA/L5/L18/L25 subcomplex. Contacts the 5S rRNA and the P site tRNA. Forms a bridge to the 30S subunit in the 70S ribosome.

Its function is as follows. This is one of the proteins that bind and probably mediate the attachment of the 5S RNA into the large ribosomal subunit, where it forms part of the central protuberance. In the 70S ribosome it contacts protein S13 of the 30S subunit (bridge B1b), connecting the 2 subunits; this bridge is implicated in subunit movement. Contacts the P site tRNA; the 5S rRNA and some of its associated proteins might help stabilize positioning of ribosome-bound tRNAs. The sequence is that of Large ribosomal subunit protein uL5 from Cupriavidus necator (strain ATCC 17699 / DSM 428 / KCTC 22496 / NCIMB 10442 / H16 / Stanier 337) (Ralstonia eutropha).